The sequence spans 215 residues: Cytidylate kinase (215 aa).

10-18 (GPAASGKGT) is an ATP binding site.

Belongs to the cytidylate kinase family. Type 1 subfamily.

Its subcellular location is the cytoplasm. It carries out the reaction CMP + ATP = CDP + ADP. The enzyme catalyses dCMP + ATP = dCDP + ADP. This chain is Cytidylate kinase, found in Bartonella henselae (strain ATCC 49882 / DSM 28221 / CCUG 30454 / Houston 1) (Rochalimaea henselae).